The sequence spans 700 residues: Beta-galactosidase BgaB (700 aa).

Arg-122 and Asn-160 together coordinate substrate. The Proton donor role is filled by Glu-161. Glu-320 functions as the Nucleophile in the catalytic mechanism. Residues Trp-328 and Glu-368–His-371 contribute to the substrate site.

This sequence belongs to the glycosyl hydrolase 42 family. In terms of assembly, trimer. Tetramer. In terms of processing, the N-terminus is blocked.

It catalyses the reaction Hydrolysis of terminal non-reducing beta-D-galactose residues in beta-D-galactosides.. Inhibited by high substrate concentrations (100 mg/ml). No effect on activity with various EDTA concentrations (0-1 mM). 20-fold higher activity when cells grown on TOS than when cells grown on galactose, glucose and lactose. In terms of biological role, involved in the hydrolysis of transgalactooligosaccharides (TOS). Highly active towards Gal(beta1-4)Gal and Gal(beta1-4)-Gal-containing oligosaccharides. Low activity towards Gal(beta1-3)Gal, lactose and Gal(beta1-3)GalOMe. No activity towards Gal(beta1-6)Gal, Gal(beta1-4)Man, Gal(alpha1-4)Gal, Gal(alpha1-3)Gal(beta1-4)Gal, lactulose, 3'fucosyllactose, lacto-N-fucopentaose I, lacto-N-fucopentaose II, cellobiose, maltose or sucrose. No transglycosylation activity is found at high substrate concentrations (100 mg/ml) and only low transglycosylation activity at lower substrate concentrations (10 mg/ml). This is Beta-galactosidase BgaB (bgaB) from Bifidobacterium adolescentis (strain ATCC 15703 / DSM 20083 / NCTC 11814 / E194a).